A 458-amino-acid chain; its full sequence is Flavohemoprotein (458 aa).

The region spanning 2–158 (PLSEDTIKAV…LAHLFVRREE (157 aa)) is the Globin domain. His-107 lines the heme b pocket. Residues Tyr-117 and Glu-157 each act as charge relay system in the active site. The tract at residues 169–457 (GGWRQTRSFR…FEMFGPFKPL (289 aa)) is reductase. Residues 172–279 (RQTRSFRVEE…APPYGDFFLE (108 aa)) form the FAD-binding FR-type domain. FAD contacts are provided by residues Tyr-211 and 228-231 (RQYS). 320–325 (GIGQTP) lines the NADP(+) pocket. 450–453 (MFGP) lines the FAD pocket.

Belongs to the globin family. Two-domain flavohemoproteins subfamily. The protein in the C-terminal section; belongs to the flavoprotein pyridine nucleotide cytochrome reductase family. Monomer. The cofactor is heme b. It depends on FAD as a cofactor.

The catalysed reaction is 2 nitric oxide + NADPH + 2 O2 = 2 nitrate + NADP(+) + H(+). It catalyses the reaction 2 nitric oxide + NADH + 2 O2 = 2 nitrate + NAD(+) + H(+). In terms of biological role, flavohemoprotein involved in nitric oxide (NO) detoxification in an aerobic process, termed nitric oxide dioxygenase (NOD) reaction that utilizes O(2) and NAD(P)H to convert NO to nitrate, which protects the protozoan parasite from various noxious nitrogen compounds. Therefore, plays a central role in the inducible response to nitrosative stress. May also be involved in O(2) detoxification. This chain is Flavohemoprotein (hmpA), found in Giardia intestinalis (strain ATCC 50581 / GS clone H7) (Giardia lamblia).